Consider the following 510-residue polypeptide: D-alanine--D-alanyl carrier protein ligase (510 aa).

157 to 158 (TS) provides a ligand contact to ATP. D202 contacts D-alanine. ATP is bound at residue 297 to 302 (NTYGPT). V306 is a binding site for D-alanine. Residues D389 and K498 each coordinate ATP. K498 serves as a coordination point for D-alanine.

This sequence belongs to the ATP-dependent AMP-binding enzyme family. DltA subfamily.

The protein resides in the cytoplasm. It catalyses the reaction holo-[D-alanyl-carrier protein] + D-alanine + ATP = D-alanyl-[D-alanyl-carrier protein] + AMP + diphosphate. Its pathway is cell wall biogenesis; lipoteichoic acid biosynthesis. Functionally, catalyzes the first step in the D-alanylation of lipoteichoic acid (LTA), the activation of D-alanine and its transfer onto the D-alanyl carrier protein (Dcp) DltC. In an ATP-dependent two-step reaction, forms a high energy D-alanyl-AMP intermediate, followed by transfer of the D-alanyl residue as a thiol ester to the phosphopantheinyl prosthetic group of the Dcp. D-alanylation of LTA plays an important role in modulating the properties of the cell wall in Gram-positive bacteria, influencing the net charge of the cell wall. The sequence is that of D-alanine--D-alanyl carrier protein ligase from Listeria monocytogenes serovar 1/2a (strain ATCC BAA-679 / EGD-e).